The primary structure comprises 60 residues: Large ribosomal subunit protein uL30 (60 aa).

The protein belongs to the universal ribosomal protein uL30 family. As to quaternary structure, part of the 50S ribosomal subunit.

This chain is Large ribosomal subunit protein uL30, found in Streptococcus suis (strain 98HAH33).